The sequence spans 329 residues: 3-isopropylmalate dehydrogenase (329 aa).

Residues R83, R93, R114, and D200 each contribute to the substrate site. Mg(2+)-binding residues include D200, D224, and D228. Residue 257–269 (GSAPQIAGKNIAN) participates in NAD(+) binding.

This sequence belongs to the isocitrate and isopropylmalate dehydrogenases family. In terms of assembly, homotetramer. Mg(2+) is required as a cofactor. The cofactor is Mn(2+).

It localises to the cytoplasm. The catalysed reaction is (2R,3S)-3-isopropylmalate + NAD(+) = 4-methyl-2-oxopentanoate + CO2 + NADH. It functions in the pathway amino-acid biosynthesis; L-leucine biosynthesis; L-leucine from 3-methyl-2-oxobutanoate: step 3/4. In terms of biological role, catalyzes the oxidation of 3-carboxy-2-hydroxy-4-methylpentanoate (3-isopropylmalate) to 3-carboxy-4-methyl-2-oxopentanoate. The product decarboxylates to 4-methyl-2 oxopentanoate. The polypeptide is 3-isopropylmalate dehydrogenase (leuB) (Methanothermobacter thermautotrophicus (strain ATCC 29096 / DSM 1053 / JCM 10044 / NBRC 100330 / Delta H) (Methanobacterium thermoautotrophicum)).